Consider the following 180-residue polypeptide: Large ribosomal subunit protein uL5 (180 aa).

This sequence belongs to the universal ribosomal protein uL5 family. In terms of assembly, part of the 50S ribosomal subunit; part of the 5S rRNA/L5/L18/L25 subcomplex. Contacts the 5S rRNA and the P site tRNA. Forms a bridge to the 30S subunit in the 70S ribosome.

In terms of biological role, this is one of the proteins that bind and probably mediate the attachment of the 5S RNA into the large ribosomal subunit, where it forms part of the central protuberance. In the 70S ribosome it contacts protein S13 of the 30S subunit (bridge B1b), connecting the 2 subunits; this bridge is implicated in subunit movement. Contacts the P site tRNA; the 5S rRNA and some of its associated proteins might help stabilize positioning of ribosome-bound tRNAs. This Ruminiclostridium cellulolyticum (strain ATCC 35319 / DSM 5812 / JCM 6584 / H10) (Clostridium cellulolyticum) protein is Large ribosomal subunit protein uL5.